Here is a 260-residue protein sequence, read N- to C-terminus: Acidic leucine-rich nuclear phosphoprotein 32 family member E (260 aa).

Position 1 is an N-acetylmethionine (methionine 1). LRR repeat units lie at residues 18–38, 43–64, 65–87, and 89–110; these read EVTELVLDNCLCVNGEIEGLN, ELEFLSMANVELSSLARLPSLN, KLRKLELSDNIISGGLEVLAEKC, and NLTYLNLSGNKIKDLSTVEALQ. Lysine 68 is covalently cross-linked (Glycyl lysine isopeptide (Lys-Gly) (interchain with G-Cter in SUMO2)). The LRRCT domain occupies 123-161; it reads CEITNLEDYRESIFELLQQITYLDGFDQEDNEAPDSEEE. 2 stretches are compositionally biased toward acidic residues: residues 149-208 and 218-240; these read DQED…EEEV and IQDEEDDDDYVDEGEEEEEEEEE. Positions 149-260 are disordered; that stretch reads DQEDNEAPDS…AEDDGEEDDD (112 aa). The segment at 207–260 is ZID domain; the sequence is EVGLSYLMKDEIQDEEDDDDYVDEGEEEEEEEEEGLRGEKRKRDAEDDGEEDDD. The segment covering 241 to 251 has biased composition (basic and acidic residues); that stretch reads GLRGEKRKRDA.

It belongs to the ANP32 family. Component of a SWR1-like complex, composed of EP400, KAT5/TIP60, TRRAP, BRD8, RUVBL1, RUVBL2, ING3 and ANP32E; the complex does not contain SRCAP. Interacts with H2A.Z/H2AZ1. Interacts with the importin alpha KPNA1 and KPNA2. Post-translationally, phosphorylated. The phosphorylation is nuclear localization signal (NLS)-dependent. Expressed at highest levels in cerebellum and spleen. In the cerebellum, expressed mainly in granule cells and, to a lesser extent, in Purkinje cells.

It localises to the cytoplasm. The protein resides in the nucleus. Functionally, histone chaperone that specifically mediates the genome-wide removal of histone H2A.Z/H2AZ1 from the nucleosome: removes H2A.Z/H2AZ1 from its normal sites of deposition, especially from enhancer and insulator regions. Not involved in deposition of H2A.Z/H2AZ1 in the nucleosome. May stabilize the evicted H2A.Z/H2AZ1-H2B dimer, thus shifting the equilibrium towards dissociation and the off-chromatin state. Inhibits activity of protein phosphatase 2A (PP2A). Does not inhibit protein phosphatase 1. May play a role in cerebellar development and synaptogenesis. The protein is Acidic leucine-rich nuclear phosphoprotein 32 family member E (Anp32e) of Mus musculus (Mouse).